The following is a 124-amino-acid chain: Trophoblast-specific protein alpha (124 aa).

Residues 1-18 (MTPTIFLVILCLGVASAV) form the signal peptide. Disordered regions lie at residues 51–74 (KLHSSENDQETEGSNIEMSASGQL) and 91–124 (FEEEENKPQPVVDDPEFEDYTESGDGFFVPNQPQ). Polar residues predominate over residues 62–74 (EGSNIEMSASGQL). Residues 103 to 112 (DDPEFEDYTE) are compositionally biased toward acidic residues.

The protein localises to the secreted. Its subcellular location is the extracellular space. Its function is as follows. It may be a growth factor/hormone, perhaps involved in interaction between the maternal and fetal systems in maintenance of pregnancy. The polypeptide is Trophoblast-specific protein alpha (Tpbpa) (Mus musculus (Mouse)).